The chain runs to 325 residues: Delta(1)-pyrroline-2-carboxylate reductase (325 aa).

This sequence belongs to the ornithine cyclodeaminase/mu-crystallin family.

It carries out the reaction L-proline + NAD(+) = 1-pyrroline-2-carboxylate + NADH + H(+). It catalyses the reaction L-proline + NADP(+) = 1-pyrroline-2-carboxylate + NADPH + H(+). Its function is as follows. Catalyzes the reduction of Delta(1)-pyrroline-2-carboxylate (Pyr2C) to L-proline, using preferentially NADPH over NADH as the electron donor. Is likely involved in a degradation pathway that converts trans-3-hydroxy-L-proline (t3LHyp) to L-proline, which allows B.cereus to grow on t3LHyp as a sole carbon source. In Bacillus cereus (strain ATCC 14579 / DSM 31 / CCUG 7414 / JCM 2152 / NBRC 15305 / NCIMB 9373 / NCTC 2599 / NRRL B-3711), this protein is Delta(1)-pyrroline-2-carboxylate reductase.